The primary structure comprises 611 residues: Threonine--tRNA ligase (611 aa).

The catalytic stretch occupies residues 209–502 (DHRRLGKDLE…MTENYAGDFP (294 aa)). Zn(2+) contacts are provided by C302, H353, and H479.

The protein belongs to the class-II aminoacyl-tRNA synthetase family. In terms of assembly, homodimer. Zn(2+) serves as cofactor.

It localises to the cytoplasm. The enzyme catalyses tRNA(Thr) + L-threonine + ATP = L-threonyl-tRNA(Thr) + AMP + diphosphate + H(+). Catalyzes the attachment of threonine to tRNA(Thr) in a two-step reaction: L-threonine is first activated by ATP to form Thr-AMP and then transferred to the acceptor end of tRNA(Thr). Also edits incorrectly charged L-seryl-tRNA(Thr). The protein is Threonine--tRNA ligase of Synechococcus sp. (strain CC9902).